Consider the following 149-residue polypeptide: Large ribosomal subunit protein uL13 (149 aa).

The protein belongs to the universal ribosomal protein uL13 family. Part of the 50S ribosomal subunit.

Functionally, this protein is one of the early assembly proteins of the 50S ribosomal subunit, although it is not seen to bind rRNA by itself. It is important during the early stages of 50S assembly. The polypeptide is Large ribosomal subunit protein uL13 (Bifidobacterium adolescentis (strain ATCC 15703 / DSM 20083 / NCTC 11814 / E194a)).